Consider the following 217-residue polypeptide: NADH-quinone oxidoreductase subunit I (217 aa).

The segment at threonine 22 to histidine 41 is disordered. 4Fe-4S ferredoxin-type domains are found at residues leucine 43–alanine 73 and arginine 89–aspartate 118. The [4Fe-4S] cluster site is built by cysteine 53, cysteine 56, cysteine 59, cysteine 63, cysteine 98, cysteine 101, cysteine 104, and cysteine 108. The disordered stretch occupies residues alanine 193–arginine 217.

Belongs to the complex I 23 kDa subunit family. NDH-1 is composed of 14 different subunits. Subunits NuoA, H, J, K, L, M, N constitute the membrane sector of the complex. [4Fe-4S] cluster is required as a cofactor.

It localises to the cell membrane. The enzyme catalyses a quinone + NADH + 5 H(+)(in) = a quinol + NAD(+) + 4 H(+)(out). Functionally, NDH-1 shuttles electrons from NADH, via FMN and iron-sulfur (Fe-S) centers, to quinones in the respiratory chain. The immediate electron acceptor for the enzyme in this species is believed to be ubiquinone. Couples the redox reaction to proton translocation (for every two electrons transferred, four hydrogen ions are translocated across the cytoplasmic membrane), and thus conserves the redox energy in a proton gradient. The protein is NADH-quinone oxidoreductase subunit I of Frankia casuarinae (strain DSM 45818 / CECT 9043 / HFP020203 / CcI3).